We begin with the raw amino-acid sequence, 394 residues long: Elongation factor Tu (394 aa).

Residues 10–204 (KEHANIGTIG…AVDDYIPTPE (195 aa)) enclose the tr-type G domain. The interval 19-26 (GHVDHGKT) is G1. 19-26 (GHVDHGKT) lines the GTP pocket. Threonine 26 contributes to the Mg(2+) binding site. The tract at residues 60-64 (GITIN) is G2. A G3 region spans residues 81 to 84 (DCPG). Residues 81-85 (DCPGH) and 136-139 (NKVD) contribute to the GTP site. Positions 136–139 (NKVD) are G4. The segment at 174–176 (SAL) is G5.

This sequence belongs to the TRAFAC class translation factor GTPase superfamily. Classic translation factor GTPase family. EF-Tu/EF-1A subfamily. As to quaternary structure, monomer.

It is found in the cytoplasm. It carries out the reaction GTP + H2O = GDP + phosphate + H(+). In terms of biological role, GTP hydrolase that promotes the GTP-dependent binding of aminoacyl-tRNA to the A-site of ribosomes during protein biosynthesis. The protein is Elongation factor Tu of Staphylococcus epidermidis (strain ATCC 35984 / DSM 28319 / BCRC 17069 / CCUG 31568 / BM 3577 / RP62A).